A 1409-amino-acid polypeptide reads, in one-letter code: Tensin-2 (1409 aa).

Positions 1 to 35 are disordered; it reads MKSSGPVERLLRALGRRDSSRAASRPRKAEPHSFR. Over residues 9-20 the composition is skewed to basic and acidic residues; it reads RLLRALGRRDSS. The segment at 31-79 adopts a Phorbol-ester/DAG-type zinc-finger fold; that stretch reads PHSFREKVFRKKPPVCAVCKVTIDGTGVSCRVCKVATHRKCEAKVTSAC. Phosphothreonine is present on threonine 91. A phosphoserine mark is found at serine 118 and serine 120. The region spanning 122–294 is the Phosphatase tensin-type domain; sequence DPLMERRWDL…SYFSGLLSGS (173 aa). Cysteine 231 (phosphocysteine intermediate) is an active-site residue. Positions 299-425 constitute a C2 tensin-type domain; sequence SSPLFLHYVL…ASVEFVFSSS (127 aa). Serine 455 carries the post-translational modification Phosphoserine. A Phosphotyrosine modification is found at tyrosine 456. The segment at 462–536 is disordered; sequence HHEDSVDGSL…SPGRPPPTAA (75 aa). Serine 466 is subject to Phosphoserine. Threonine 474 carries the phosphothreonine modification. The residue at position 481 (serine 481) is a Phosphoserine. A Phosphotyrosine modification is found at tyrosine 483. The span at 491-506 shows a compositional bias: pro residues; the sequence is RQTPPAPSPEPPPPPM. At arginine 555 the chain carries Omega-N-methylarginine. Disordered regions lie at residues 562 to 582, 812 to 1098, and 1111 to 1130; these read AILD…GVYP, PGEG…SSPA, and LSDN…QSNV. Phosphoserine occurs at positions 820, 825, 830, 832, 835, and 845. Composition is skewed to polar residues over residues 900-918 and 930-940; these read SASS…SSPV and RSPTSAPTQRL. The residue at position 910 (threonine 910) is a Phosphothreonine. Residues serine 931, serine 941, and serine 972 each carry the phosphoserine modification. The segment covering 968–982 has biased composition (pro residues); sequence PLAPSPVSPTFPPSS. Residue threonine 977 is modified to Phosphothreonine. A phosphoserine mark is found at serine 991 and serine 1003. The segment covering 1046–1056 has biased composition (pro residues); the sequence is PEPPQSSPTPA. The SH2 domain occupies 1140–1247; that stretch reads WYKPHLSRDQ…SLPCCLRIPS (108 aa). Threonine 1182 is modified (phosphothreonine). The residue at position 1247 (serine 1247) is a Phosphoserine. A PTB domain is found at 1275-1408; it reads ACSVLYLTSV…FITKVLLGQR (134 aa).

The protein belongs to the PTEN phosphatase protein family. Interacts with AXL. Interacts with SYK; leading to its phosphorylation. Interacts with SQSTM1 (via PB1 domain); the interaction leads to sequestration of TNS2 in cytoplasmic aggregates with SQSTM1 and promotes TNS2 ubiquitination and proteasomal degradation. In terms of processing, ubiquitinated following sequestration in cytoplasmic aggregates with SQSTM1, leading to proteasomal degradation. As to expression, detected in heart, kidney, brain, thymus, spleen, liver, placenta, lung, skeletal muscle and small intestine.

The protein localises to the cell junction. The protein resides in the focal adhesion. It localises to the cell membrane. It is found in the cytoplasm. The enzyme catalyses O-phospho-L-tyrosyl-[protein] + H2O = L-tyrosyl-[protein] + phosphate. Its function is as follows. Tyrosine-protein phosphatase which regulates cell motility, proliferation and muscle-response to insulin. Phosphatase activity is mediated by binding to phosphatidylinositol-3,4,5-triphosphate (PtdIns(3,4,5)P3) via the SH2 domain. In muscles and under catabolic conditions, dephosphorylates IRS1 leading to its degradation and muscle atrophy. Negatively regulates PI3K-AKT pathway activation. Dephosphorylates nephrin NPHS1 in podocytes which regulates activity of the mTORC1 complex. Under normal glucose conditions, NPHS1 outcompetes IRS1 for binding to phosphatidylinositol 3-kinase (PI3K) which balances mTORC1 activity but high glucose conditions lead to up-regulation of TNS2, increased NPHS1 dephosphorylation and activation of mTORC1, contributing to podocyte hypertrophy and proteinuria. Required for correct podocyte morphology, podocyte-glomerular basement membrane interaction and integrity of the glomerular filtration barrier. Enhances RHOA activation in the presence of DLC1. Plays a role in promoting DLC1-dependent remodeling of the extracellular matrix. This Homo sapiens (Human) protein is Tensin-2 (TNS2).